The following is a 413-amino-acid chain: Peptide chain release factor 1, mitochondrial (413 aa).

Residues 1–40 (MRVLIRPNFLSNLIRYCSRGTHSHDRSLRSVLSSNMIRLY) constitute a mitochondrion transit peptide. An N5-methylglutamine modification is found at glutamine 287.

Belongs to the prokaryotic/mitochondrial release factor family. In terms of processing, methylation increases the termination efficiency of RF1. Mostly expressed in seedlings, stems and adult plants, and, to a lower extent, in siliques. Barely detected in etiolated seedlings and roots.

The protein resides in the mitochondrion. Functionally, peptide chain release factor 1 directs the termination of translation in response to the peptide chain termination codons UAG and UAA in mitochondria. The chain is Peptide chain release factor 1, mitochondrial from Arabidopsis thaliana (Mouse-ear cress).